The chain runs to 234 residues: Sugar fermentation stimulation protein homolog (234 aa).

The protein belongs to the SfsA family.

This chain is Sugar fermentation stimulation protein homolog, found in Shewanella baltica (strain OS155 / ATCC BAA-1091).